Reading from the N-terminus, the 488-residue chain is Probable cytosol aminopeptidase (488 aa).

Mn(2+) contacts are provided by Lys251 and Asp256. Residue Lys263 is part of the active site. Asp274, Asp333, and Glu335 together coordinate Mn(2+). Arg337 is an active-site residue.

The protein belongs to the peptidase M17 family. Mn(2+) is required as a cofactor.

The protein resides in the cytoplasm. It carries out the reaction Release of an N-terminal amino acid, Xaa-|-Yaa-, in which Xaa is preferably Leu, but may be other amino acids including Pro although not Arg or Lys, and Yaa may be Pro. Amino acid amides and methyl esters are also readily hydrolyzed, but rates on arylamides are exceedingly low.. It catalyses the reaction Release of an N-terminal amino acid, preferentially leucine, but not glutamic or aspartic acids.. Functionally, presumably involved in the processing and regular turnover of intracellular proteins. Catalyzes the removal of unsubstituted N-terminal amino acids from various peptides. This is Probable cytosol aminopeptidase from Cenarchaeum symbiosum (strain A).